We begin with the raw amino-acid sequence, 55 residues long: Large ribosomal subunit protein bL33 (55 aa).

The protein belongs to the bacterial ribosomal protein bL33 family.

In Gluconacetobacter diazotrophicus (strain ATCC 49037 / DSM 5601 / CCUG 37298 / CIP 103539 / LMG 7603 / PAl5), this protein is Large ribosomal subunit protein bL33.